The sequence spans 169 residues: Calfumirin-1 (169 aa).

4 EF-hand domains span residues 6-41, 42-77, 93-128, and 129-164; these read NIVE…KKAF, NPER…DKAL, EVEE…TGAK, and DPEK…VQKL. The Ca(2+) site is built by aspartate 19, asparagine 21, aspartate 23, glutamate 25, glutamate 30, aspartate 55, aspartate 57, aspartate 59, lysine 61, glutamate 66, aspartate 108, asparagine 110, aspartate 112, glutamate 117, aspartate 142, asparagine 144, aspartate 146, threonine 148, and glutamate 153.

May be involved in the phase-shift of cells from growth to differentiation. This is Calfumirin-1 (cafA) from Dictyostelium discoideum (Social amoeba).